Here is a 278-residue protein sequence, read N- to C-terminus: Undecaprenyl-diphosphatase 1 (278 aa).

Helical transmembrane passes span 1–21, 43–63, 83–103, 112–132, 192–212, 224–244, and 257–277; these read MFFG…TEFL, AFTT…VVLL, IWAT…IGFL, LMNW…FIFI, FSFF…IGSY, IVIL…VIKW, and FGWY…IGII.

It belongs to the UppP family.

It is found in the cell membrane. The enzyme catalyses di-trans,octa-cis-undecaprenyl diphosphate + H2O = di-trans,octa-cis-undecaprenyl phosphate + phosphate + H(+). In terms of biological role, catalyzes the dephosphorylation of undecaprenyl diphosphate (UPP). Confers resistance to bacitracin. This is Undecaprenyl-diphosphatase 1 from Oenococcus oeni (strain ATCC BAA-331 / PSU-1).